The chain runs to 345 residues: Phosphoribosylformylglycinamidine cyclo-ligase (345 aa).

Belongs to the AIR synthase family.

It localises to the cytoplasm. It carries out the reaction 2-formamido-N(1)-(5-O-phospho-beta-D-ribosyl)acetamidine + ATP = 5-amino-1-(5-phospho-beta-D-ribosyl)imidazole + ADP + phosphate + H(+). Its pathway is purine metabolism; IMP biosynthesis via de novo pathway; 5-amino-1-(5-phospho-D-ribosyl)imidazole from N(2)-formyl-N(1)-(5-phospho-D-ribosyl)glycinamide: step 2/2. This is Phosphoribosylformylglycinamidine cyclo-ligase from Shigella dysenteriae serotype 1 (strain Sd197).